Consider the following 105-residue polypeptide: NADH-quinone oxidoreductase subunit K (105 aa).

3 helical membrane passes run 9-29 (PNYY…GVLV), 34-54 (IVLF…LVTF), and 65-85 (IIAF…LAII).

This sequence belongs to the complex I subunit 4L family. In terms of assembly, NDH-1 is composed of 14 different subunits. Subunits NuoA, H, J, K, L, M, N constitute the membrane sector of the complex.

It is found in the cell membrane. The catalysed reaction is a quinone + NADH + 5 H(+)(in) = a quinol + NAD(+) + 4 H(+)(out). Functionally, NDH-1 shuttles electrons from NADH, via FMN and iron-sulfur (Fe-S) centers, to quinones in the respiratory chain. The immediate electron acceptor for the enzyme in this species is believed to be a menaquinone. Couples the redox reaction to proton translocation (for every two electrons transferred, four hydrogen ions are translocated across the cytoplasmic membrane), and thus conserves the redox energy in a proton gradient. The sequence is that of NADH-quinone oxidoreductase subunit K from Salinispora arenicola (strain CNS-205).